The following is a 1024-amino-acid chain: Gamma-tubulin complex component 5 (1024 aa).

Disordered regions lie at residues 153-203 (IGLG…GGPQ), 523-545 (NEDKVSDSASASSGSDQGPSSRQ), and 853-873 (SQAKEDIPRDQDTPSQFGPPK). Basic and acidic residues predominate over residues 189–198 (TPLEEQDHNR). Positions 529 to 543 (DSASASSGSDQGPSS) are enriched in low complexity. A compositionally biased stretch (basic and acidic residues) spans 853–864 (SQAKEDIPRDQD).

This sequence belongs to the TUBGCP family. As to quaternary structure, component of the gamma-tubulin ring complex (gTuRC) consisting of TUBGCP2, TUBGCP3, TUBGCP4, TUBGCP5 and TUBGCP6 and gamma-tubulin TUBG1 or TUBG2. TUBGCP2, TUBGCP3, TUBGCP4, TUBGCP5 and TUBGCP6 assemble in a 5:5:2:1:1 stoichiometry; each is associated with a gamma-tubulin, thereby arranging 14 gamma-tubulins in a helical manner. Gamma-tubulin at the first position is blocked by TUBGCP3 at the last position, allowing 13 protafilaments to grow into a microtubule. The gTuRC (via TUBGCP3 and TUBGCP6) interacts with ACTB and MZT1; the interactions form a luminal bridge that stabilizes the initial structure during complex assembly. The gTuRC (via TUBGCP2) interacts with MZT2A/MZT2B and CDK5RAP2 (via CM1 motif); the interactions play a role in gTuRC activation.

It localises to the cytoplasm. Its subcellular location is the cytoskeleton. It is found in the microtubule organizing center. The protein localises to the centrosome. Component of the gamma-tubulin ring complex (gTuRC) which mediates microtubule nucleation. The gTuRC regulates the minus-end nucleation of alpha-beta tubulin heterodimers that grow into microtubule protafilaments, a critical step in centrosome duplication and spindle formation. This is Gamma-tubulin complex component 5 (Tubgcp5) from Mus musculus (Mouse).